The sequence spans 439 residues: UPF0229 protein Nham_0975 (439 aa).

The disordered stretch occupies residues 39–106; it reads RSGRISDADG…AGTPDPSMKD (68 aa). Residues 58–76 are compositionally biased toward basic and acidic residues; it reads STDEPRFEAAKDSGRREHV.

The protein belongs to the UPF0229 family.

This chain is UPF0229 protein Nham_0975, found in Nitrobacter hamburgensis (strain DSM 10229 / NCIMB 13809 / X14).